Consider the following 369-residue polypeptide: Flagellar P-ring protein (369 aa).

An N-terminal signal peptide occupies residues 1–22 (MFNVRQLIATTLLLSCAFAAQA).

The protein belongs to the FlgI family. In terms of assembly, the basal body constitutes a major portion of the flagellar organelle and consists of four rings (L,P,S, and M) mounted on a central rod.

The protein localises to the periplasm. It is found in the bacterial flagellum basal body. Its function is as follows. Assembles around the rod to form the L-ring and probably protects the motor/basal body from shearing forces during rotation. The chain is Flagellar P-ring protein from Pseudomonas putida (strain ATCC 47054 / DSM 6125 / CFBP 8728 / NCIMB 11950 / KT2440).